The primary structure comprises 412 residues: Non-specific lipid-transfer protein-like 2 (412 aa).

The Microbody targeting signal motif lies at 410-412 (SKI).

The protein belongs to the thiolase-like superfamily. Thiolase family. In terms of tissue distribution, expressed in intestine, hypodermis and body-wall muscle.

Its subcellular location is the peroxisome. It carries out the reaction choloyl-CoA + propanoyl-CoA = 3alpha,7alpha,12alpha-trihydroxy-24-oxo-5beta-cholestan-26-oyl-CoA + CoA. Inhibited by acetyl-CoA. In terms of biological role, catalyzes the thiolytic cleavage of 3-ketoacyl-CoA with 8-16 carbon residues in the acyl group using a ping-pong mechanism whereby binding to 3-ketooctanoyl-CoA results in the release of acetyl-CoA and the subsequent addition of CoA produces 3-ketohexanohyl-CoA. Involved in the biosynthesis of the dauer pheromone by providing short chains of fatty acid that are attached to the ascarylose sugars of the pheromone. The protein is Non-specific lipid-transfer protein-like 2 of Caenorhabditis elegans.